The primary structure comprises 162 residues: 3-hydroxyacyl-[acyl-carrier-protein] dehydratase FabZ (162 aa).

Histidine 49 is an active-site residue.

It belongs to the thioester dehydratase family. FabZ subfamily.

It localises to the cytoplasm. The enzyme catalyses a (3R)-hydroxyacyl-[ACP] = a (2E)-enoyl-[ACP] + H2O. Its function is as follows. Involved in unsaturated fatty acids biosynthesis. Catalyzes the dehydration of short chain beta-hydroxyacyl-ACPs and long chain saturated and unsaturated beta-hydroxyacyl-ACPs. This is 3-hydroxyacyl-[acyl-carrier-protein] dehydratase FabZ from Solibacter usitatus (strain Ellin6076).